Reading from the N-terminus, the 177-residue chain is Alkyl hydroperoxide reductase AhpD (177 aa).

The active-site Proton donor is the cysteine 131. An intrachain disulfide couples cysteine 131 to cysteine 134. Cysteine 134 acts as the Cysteine sulfenic acid (-SOH) intermediate in catalysis.

The protein belongs to the AhpD family. In terms of assembly, homotrimer.

It carries out the reaction N(6)-[(R)-dihydrolipoyl]-L-lysyl-[lipoyl-carrier protein] + a hydroperoxide = N(6)-[(R)-lipoyl]-L-lysyl-[lipoyl-carrier protein] + an alcohol + H2O. Antioxidant protein with alkyl hydroperoxidase activity. Required for the reduction of the AhpC active site cysteine residues and for the regeneration of the AhpC enzyme activity. In Streptomyces avermitilis (strain ATCC 31267 / DSM 46492 / JCM 5070 / NBRC 14893 / NCIMB 12804 / NRRL 8165 / MA-4680), this protein is Alkyl hydroperoxide reductase AhpD.